The chain runs to 289 residues: 4-hydroxy-tetrahydrodipicolinate synthase (289 aa).

T43 is a binding site for pyruvate. Residue Y131 is the Proton donor/acceptor of the active site. The Schiff-base intermediate with substrate role is filled by K160. A pyruvate-binding site is contributed by V200.

It belongs to the DapA family. Homotetramer; dimer of dimers.

It is found in the cytoplasm. It catalyses the reaction L-aspartate 4-semialdehyde + pyruvate = (2S,4S)-4-hydroxy-2,3,4,5-tetrahydrodipicolinate + H2O + H(+). It participates in amino-acid biosynthesis; L-lysine biosynthesis via DAP pathway; (S)-tetrahydrodipicolinate from L-aspartate: step 3/4. Functionally, catalyzes the condensation of (S)-aspartate-beta-semialdehyde [(S)-ASA] and pyruvate to 4-hydroxy-tetrahydrodipicolinate (HTPA). The polypeptide is 4-hydroxy-tetrahydrodipicolinate synthase (Methanococcus maripaludis (strain DSM 14266 / JCM 13030 / NBRC 101832 / S2 / LL)).